The chain runs to 348 residues: Rhodopsin (348 aa).

At Met-1 the chain carries N-acetylmethionine. Topologically, residues 1–36 (MNGTEGPNFYVPFSNATGVVRSPFEYPQYYLAEPWQ) are extracellular. N-linked (GlcNAc...) asparagine glycans are attached at residues Asn-2 and Asn-15. A helical transmembrane segment spans residues 37–61 (FSMLAAYMFLLIVLGFPINFLTLYV). Residues 62–73 (TVQHKKLRTPLN) are Cytoplasmic-facing. The helical transmembrane segment at 74-96 (YILLNLAVADLFMVFGGFTTTLY) threads the bilayer. Topologically, residues 97 to 110 (TSLHGYFVFGPTGC) are extracellular. The cysteines at positions 110 and 187 are disulfide-linked. Residues 111 to 133 (NAEGFFATLGGEIALWSLVVLAI) form a helical membrane-spanning segment. The 'Ionic lock' involved in activated form stabilization motif lies at 134–136 (ERY). Residues 134–152 (ERYVVVCKPMSNFRFGENH) lie on the Cytoplasmic side of the membrane. Residues 153-173 (AIMGVAFTWVMALACAAPPLF) traverse the membrane as a helical segment. At 174–202 (GWSRYIPEGLQCSCGIDYYTLKPEVNNES) the chain is on the extracellular side. Glu-201 lines the Zn(2+) pocket. Residues 203–224 (FVIYMFVVHFTIPMIVIFFCYG) form a helical membrane-spanning segment. The Cytoplasmic portion of the chain corresponds to 225-252 (QLVFTVKEARAQQQESATTQKAEKEVTR). The helical transmembrane segment at 253–274 (MVIIMVIAFLICWVPYASVAFY) threads the bilayer. The Extracellular portion of the chain corresponds to 275 to 286 (IFTHQGSNFGPI). Gln-279 is a binding site for Zn(2+). The helical transmembrane segment at 287-308 (FMTIPAFFAKSASIYNPVIYIM) threads the bilayer. Lys-296 carries the N6-(retinylidene)lysine modification. The Cytoplasmic segment spans residues 309-348 (MNKQFRNCMLTTICCGKNPLGDDEASATVSKTETSQVAPA). 2 S-palmitoyl cysteine lipidation sites follow: Cys-322 and Cys-323. The interaction with SAG stretch occupies residues 330-348 (DDEASATVSKTETSQVAPA). Ser-334 carries the phosphoserine modification. Thr-336 is modified (phosphothreonine). Ser-338 carries the post-translational modification Phosphoserine. Residues Thr-340 and Thr-342 each carry the phosphothreonine modification. Ser-343 carries the phosphoserine modification.

It belongs to the G-protein coupled receptor 1 family. Opsin subfamily. As to quaternary structure, homodimer. May form a complex composed of RHO, GRK1 and RCVRN in a Ca(2+)-dependent manner; RCVRN prevents the interaction between GRK1 and RHO. Interacts with GRK1. Interacts (phosphorylated form) with SAG. Interacts with GNAT1. Interacts with GNAT3. SAG and G-proteins compete for a common binding site. Interacts with PRCD; the interaction promotes PRCD stability. Forms a complex with ASAP1 and ARF4. Forms a complex with ASAP1, RAB11A, Rabin8/RAB3IP, ARF4 and RAB11FIP3; the complex regulates Golgi-to-cilia rhodopsin/RHO transport in photoreceptors. In terms of processing, phosphorylated on some or all of the serine and threonine residues present in the C-terminal region. Post-translationally, contains one covalently linked retinal chromophore. Upon light absorption, the covalently bound 11-cis-retinal is converted to all-trans-retinal. After hydrolysis of the Schiff base and release of the covalently bound all-trans-retinal, active rhodopsin is regenerated by binding of a fresh molecule of 11-cis-retinal.

It localises to the membrane. The protein resides in the cell projection. It is found in the cilium. The protein localises to the photoreceptor outer segment. Its function is as follows. Photoreceptor required for image-forming vision at low light intensity. Required for photoreceptor cell viability after birth. Light-induced isomerization of 11-cis to all-trans retinal triggers a conformational change that activates signaling via G-proteins. Subsequent receptor phosphorylation mediates displacement of the bound G-protein alpha subunit by the arrestin SAG and terminates signaling. The protein is Rhodopsin (RHO) of Macaca fascicularis (Crab-eating macaque).